The chain runs to 962 residues: Translation initiation factor IF-2 (962 aa).

Residues 99-366 (VKAAQTQAAP…KKGKKLKLEP (268 aa)) form a disordered region. A compositionally biased stretch (basic and acidic residues) spans 117–141 (DAAKARAEAAARAEARAKAEAEAAK). Positions 145–155 (AKAGNKAKPAA) are enriched in low complexity. Residues 173-216 (KPAEESKAEKAQADKMPSEKPAEPKEKAAKPKHERNGKGKDAKK) are compositionally biased toward basic and acidic residues. The segment covering 219-234 (KPAAPAVPQPVVSAEE) has biased composition (low complexity). The segment covering 235-269 (QAQRDEEARRAAALRAHQEALLKEKQERQARREAM) has biased composition (basic and acidic residues). Residues 270-283 (KQQAEQQAKAAQEA) are compositionally biased toward low complexity. Composition is skewed to basic and acidic residues over residues 314–327 (AKKEDRRNRDDEGQ) and 338–354 (GGRDRNNARNGDDERVR). Residues 462-631 (PRPPVVTVMG…LLEAEVLELT (170 aa)) form the tr-type G domain. A G1 region spans residues 471–478 (GHVDHGKT). 471–478 (GHVDHGKT) lines the GTP pocket. Positions 496-500 (GITQH) are G2. The G3 stretch occupies residues 517-520 (DTPG). Residues 517–521 (DTPGH) and 571–574 (NKID) contribute to the GTP site. A G4 region spans residues 571-574 (NKID). The tract at residues 607–609 (SAK) is G5.

Belongs to the TRAFAC class translation factor GTPase superfamily. Classic translation factor GTPase family. IF-2 subfamily.

Its subcellular location is the cytoplasm. Functionally, one of the essential components for the initiation of protein synthesis. Protects formylmethionyl-tRNA from spontaneous hydrolysis and promotes its binding to the 30S ribosomal subunits. Also involved in the hydrolysis of GTP during the formation of the 70S ribosomal complex. The polypeptide is Translation initiation factor IF-2 (Neisseria meningitidis serogroup B (strain ATCC BAA-335 / MC58)).